The primary structure comprises 526 residues: Tyrosine 2,3-aminomutase (526 aa).

Residue tyrosine 41 is the Proton donor/acceptor of the active site. A substrate-binding site is contributed by histidine 71. The segment at residues 130–132 is a cross-link (5-imidazolinone (Ala-Gly)); that stretch reads ASG. Serine 131 carries the post-translational modification 2,3-didehydroalanine (Ser). Residues asparagine 183 and arginine 288 each coordinate substrate.

Belongs to the TAL/TAM family. As to quaternary structure, homotetramer; dimer of dimers. In terms of processing, contains an active site 4-methylidene-imidazol-5-one (MIO), which is formed autocatalytically by cyclization and dehydration of residues Ala-Ser-Gly.

It catalyses the reaction L-tyrosine = 3-amino-3-(4-hydroxyphenyl)propanoate. It carries out the reaction L-tyrosine = (E)-4-coumarate + NH4(+). Has aminomutase and, to a much lesser extent, ammonia-lyase activity. Primarily, catalyzes the rearrangement of L-tyrosine to S-beta-tyrosine, which is probably incorporated into secondary metabolite myxovalargin. The aminomutase activity exclusively produces S-beta-tyrosine. In Myxococcus fulvus, this protein is Tyrosine 2,3-aminomutase.